The sequence spans 204 residues: Large ribosomal subunit protein uL3c (204 aa).

The segment at 126 to 155 (HNFTRGPMTHGSKNHREPGSIGQGSTPAKV) is disordered.

Belongs to the universal ribosomal protein uL3 family. As to quaternary structure, part of the 50S ribosomal subunit.

The protein resides in the plastid. It is found in the chloroplast. In terms of biological role, one of the primary rRNA binding proteins, it binds directly near the 3'-end of the 23S rRNA, where it nucleates assembly of the 50S subunit. The protein is Large ribosomal subunit protein uL3c (rpl3) of Guillardia theta (Cryptophyte).